Here is a 92-residue protein sequence, read N- to C-terminus: Small ribosomal subunit protein bS16 (92 aa).

Belongs to the bacterial ribosomal protein bS16 family.

The sequence is that of Small ribosomal subunit protein bS16 from Desulforudis audaxviator (strain MP104C).